Consider the following 264-residue polypeptide: 3-methyl-2-oxobutanoate hydroxymethyltransferase (264 aa).

Mg(2+) contacts are provided by aspartate 45 and aspartate 84. Residues 45 to 46 (DS), aspartate 84, and lysine 112 each bind 3-methyl-2-oxobutanoate. Residue glutamate 114 participates in Mg(2+) binding. Glutamate 181 functions as the Proton acceptor in the catalytic mechanism.

It belongs to the PanB family. As to quaternary structure, homodecamer; pentamer of dimers. Mg(2+) is required as a cofactor.

Its subcellular location is the cytoplasm. It catalyses the reaction 3-methyl-2-oxobutanoate + (6R)-5,10-methylene-5,6,7,8-tetrahydrofolate + H2O = 2-dehydropantoate + (6S)-5,6,7,8-tetrahydrofolate. The protein operates within cofactor biosynthesis; (R)-pantothenate biosynthesis; (R)-pantoate from 3-methyl-2-oxobutanoate: step 1/2. Its function is as follows. Catalyzes the reversible reaction in which hydroxymethyl group from 5,10-methylenetetrahydrofolate is transferred onto alpha-ketoisovalerate to form ketopantoate. In Shewanella piezotolerans (strain WP3 / JCM 13877), this protein is 3-methyl-2-oxobutanoate hydroxymethyltransferase.